The chain runs to 889 residues: DNA mismatch repair protein MutS (889 aa).

Over residues 1–17 the composition is skewed to low complexity; the sequence is MPKTNSSAASTNANPSS. Residues 1-20 are disordered; the sequence is MPKTNSSAASTNANPSSLQQ. 640–647 is a binding site for ATP; that stretch reads GPNMGGKS.

The protein belongs to the DNA mismatch repair MutS family.

In terms of biological role, this protein is involved in the repair of mismatches in DNA. It is possible that it carries out the mismatch recognition step. This protein has a weak ATPase activity. This Pseudoalteromonas atlantica (strain T6c / ATCC BAA-1087) protein is DNA mismatch repair protein MutS.